Consider the following 140-residue polypeptide: uncharacterized protein (140 aa).

In terms of domain architecture, N-acetyltransferase spans 2–140 (KAVIAKNEEQ…GIPHLQMMKD (139 aa)).

This sequence belongs to the acetyltransferase family.

This is an uncharacterized protein from Bacillus subtilis (strain 168).